Consider the following 317-residue polypeptide: D-alanine--D-alanine ligase (317 aa).

An ATP-grasp domain is found at Lys-104–Ala-303. An ATP-binding site is contributed by Pro-130–Thr-185. Mg(2+)-binding residues include Asp-257, Glu-270, and Asn-272.

It belongs to the D-alanine--D-alanine ligase family. Mg(2+) is required as a cofactor. Mn(2+) serves as cofactor.

The protein resides in the cytoplasm. The enzyme catalyses 2 D-alanine + ATP = D-alanyl-D-alanine + ADP + phosphate + H(+). It participates in cell wall biogenesis; peptidoglycan biosynthesis. Functionally, cell wall formation. The protein is D-alanine--D-alanine ligase of Bordetella avium (strain 197N).